The following is a 521-amino-acid chain: Leucine-rich repeat-containing protein 24 (521 aa).

A signal peptide spans methionine 1–glycine 23. In terms of domain architecture, LRRNT spans leucine 24–proline 58. 6 LRR repeats span residues glycine 59–proline 80, alanine 83–alanine 104, arginine 107–glycine 128, glutamine 131–histidine 152, arginine 155–glycine 176, and serine 179–proline 200. The N-linked (GlcNAc...) asparagine glycan is linked to asparagine 91. The LRRCT domain occupies asparagine 212 to proline 267. One can recognise an Ig-like C2-type domain in the interval proline 268–asparagine 371. An intrachain disulfide couples cysteine 289 to cysteine 353. The tract at residues glutamine 306–threonine 330 is disordered. 2 N-linked (GlcNAc...) asparagine glycosylation sites follow: asparagine 342 and asparagine 371. The disordered stretch occupies residues arginine 374–proline 395. A helical membrane pass occupies residues alanine 414–cysteine 434.

The protein localises to the membrane. In Mus musculus (Mouse), this protein is Leucine-rich repeat-containing protein 24 (Lrrc24).